We begin with the raw amino-acid sequence, 437 residues long: La-related protein 7 homolog (437 aa).

The HTH La-type RNA-binding domain maps to 38–145 (SKSPSLTIPK…KRKKKFDNRT (108 aa)). One can recognise a xRRM domain in the interval 279–397 (ELSQSCFLKI…QRSSIDEIKA (119 aa)). Positions 417-427 (RRPVSKRKNKA) are enriched in basic residues. Positions 417–437 (RRPVSKRKNKAINKMSTEVKK) are disordered.

The protein belongs to the LARP7 family. In terms of assembly, component of the telomerase holoenzyme complex composed minimally of the catalytic subunit p123 and the telomerase RNA template component. Post-translationally, the mature form of the protein is a protein of 43 kDa, which is derived from a 51 kDa precursor by proteolytic cleavage.

It is found in the nucleus. Its subcellular location is the chromosome. It localises to the telomere. RNA-binding protein required for assembly of the holoenzyme telomerase ribonucleoprotein (RNP) complex. Specifically binds telomerase RNA and promotes its assembly with catalytic subunit p123, thereby stimulating enzymatic activity and processivity of p123. Telomerase is a ribonucleoprotein enzyme essential that copies new telomeric repeats onto chromosome ends and functions to maintain cell division. The protein is La-related protein 7 homolog of Euplotes aediculatus (Ciliate).